We begin with the raw amino-acid sequence, 422 residues long: GTPase Obg (422 aa).

Residues 2–157 (AKFIDEIKLT…YLAHIVLKVM (156 aa)) enclose the Obg domain. The OBG-type G domain maps to 158 to 325 (SDVGIIGKPS…LKGKIWKILE (168 aa)). GTP-binding positions include 164 to 171 (GKPSAGKS), 189 to 193 (FTTLV), 210 to 213 (DLPG), 279 to 282 (NKSD), and 306 to 308 (SAI). Mg(2+)-binding residues include serine 171 and threonine 191. Positions 334-420 (EEEETEENVE…ILDYEFEWDG (87 aa)) constitute an OCT domain.

It belongs to the TRAFAC class OBG-HflX-like GTPase superfamily. OBG GTPase family. As to quaternary structure, monomer. Mg(2+) is required as a cofactor.

The protein resides in the cytoplasm. In terms of biological role, an essential GTPase which binds GTP, GDP and possibly (p)ppGpp with moderate affinity, with high nucleotide exchange rates and a fairly low GTP hydrolysis rate. Plays a role in control of the cell cycle, stress response, ribosome biogenesis and in those bacteria that undergo differentiation, in morphogenesis control. The sequence is that of GTPase Obg from Mycoplasmopsis agalactiae (strain NCTC 10123 / CIP 59.7 / PG2) (Mycoplasma agalactiae).